A 783-amino-acid chain; its full sequence is MGSGFSSLLPCFNQGHRNRRRHSSAANPSHSDLIDSFREPLDETLGHSYCYVPSSSNRFISPFPSDRFVSPTASFRLSPPHEPGRIRGSGSSEQLHTGFRAISGASVSANTSNSKTVLQLEDIYDDATESSFGGGVRRSVVNANGFEGTSSFSALPLQPGPDRSGLFMSGPIERGATSGPLDPPAGEISRSNSAGVHFSAPLGGVYSKKRRKKKKKSLSWHPIFGGEKKQRPWVLPVSNFVVGAKKENIVRPDVEAMAASSGENDLQWALGKAGEDRVQLAVFEKQGWLFAGIYDGFNGPDAPEFLMANLYRAVHSELQGLFWELEEEDDNPTDISTRELEQQGEFEDHVNEMASSSCPATEKEEEEMGKRLTSSLEVVEVKERKRLWELLAEAQAEDALDLSGSDRFAFSVDDAIGAGNAVSVGSKRWLLLSKLKQGLSKQGISGRKLFPWKSGVEENETEEVDNVGVEEGVDKRRKRRKAGTVDHELVLKAMSNGLEATEQAFLEMTDKVLETNPELALMGSCLLVALMRDDDVYIMNIGDSRALVAQYQVEETGESVETAERVEERRNDLDRDDGNKEPLVVDSSDSTVNNEAPLPQTKLVALQLTTDHSTSIEDEVTRIKNEHPDDNHCIVNDRVKGRLKVTRAFGAGFLKQPKLNDALLEMFRNEYIGTDPYISCTPSLRHYRLTENDQFMVLSSDGLYQYLSNVEVVSLAMEKFPDGDPAQHVIQELLVRAAKKAGMDFHELLDIPQGDRRKYHDDCTVLVIALGGSRIWKSSGKYL.

The tract at residues 151–194 (SFSALPLQPGPDRSGLFMSGPIERGATSGPLDPPAGEISRSNSA) is disordered. At Ser199 the chain carries Phosphoserine. A PPM-type phosphatase domain is found at 260–770 (SSGENDLQWA…DDCTVLVIAL (511 aa)). 2 residues coordinate Mn(2+): Asp295 and Gly296. The disordered stretch occupies residues 555 to 595 (ETGESVETAERVEERRNDLDRDDGNKEPLVVDSSDSTVNNE). Positions 562–580 (TAERVEERRNDLDRDDGNK) are enriched in basic and acidic residues. Mn(2+) is bound by residues Asp701 and Asp761.

It belongs to the PP2C family. Requires Mg(2+) as cofactor. It depends on Mn(2+) as a cofactor. In terms of tissue distribution, expressed in roots, leaves, stems, inflorescences, flowers and developing vascular tissue.

It localises to the nucleus. The catalysed reaction is O-phospho-L-seryl-[protein] + H2O = L-seryl-[protein] + phosphate. It catalyses the reaction O-phospho-L-threonyl-[protein] + H2O = L-threonyl-[protein] + phosphate. Functionally, involved in the regulation of pedicel length and of CLAVATA pathways controlling stem cell identity at shoot and flower meristems. The sequence is that of Protein phosphatase 2C 29 (PLL1) from Arabidopsis thaliana (Mouse-ear cress).